Here is a 263-residue protein sequence, read N- to C-terminus: Pimeloyl-[acyl-carrier protein] methyl ester esterase (263 aa).

Residues Trp-28, 86-87 (SL), and 149-153 (FLAIQ) contribute to the substrate site. Residue Ser-86 is the Nucleophile of the active site. Active-site residues include Asp-213 and His-240. His-240 contacts substrate.

It belongs to the AB hydrolase superfamily. Carboxylesterase BioH family. Monomer.

The protein localises to the cytoplasm. The enzyme catalyses 6-carboxyhexanoyl-[ACP] methyl ester + H2O = 6-carboxyhexanoyl-[ACP] + methanol + H(+). Its pathway is cofactor biosynthesis; biotin biosynthesis. Its function is as follows. The physiological role of BioH is to remove the methyl group introduced by BioC when the pimeloyl moiety is complete. It allows to synthesize pimeloyl-ACP via the fatty acid synthetic pathway through the hydrolysis of the ester bonds of pimeloyl-ACP esters. The chain is Pimeloyl-[acyl-carrier protein] methyl ester esterase from Shewanella oneidensis (strain ATCC 700550 / JCM 31522 / CIP 106686 / LMG 19005 / NCIMB 14063 / MR-1).